Consider the following 394-residue polypeptide: Flavohemoprotein (394 aa).

Residues 1-136 (MLSENTINIV…LANVFIQREE (136 aa)) form the Globin domain. Heme b is bound at residue H85. Residues Y95 and E135 each act as charge relay system in the active site. The segment at 147 to 394 (GGWRGLREFE…YECFGPHKVV (248 aa)) is reductase. In terms of domain architecture, FAD-binding FR-type spans 150 to 255 (RGLREFELVE…AAPAGDFFLD (106 aa)). FAD-binding positions include Y188 and 204–207 (RQYS). 268-273 (GVGLTP) contacts NADP(+). 387–390 (CFGP) is a binding site for FAD.

It belongs to the globin family. Two-domain flavohemoproteins subfamily. This sequence in the C-terminal section; belongs to the flavoprotein pyridine nucleotide cytochrome reductase family. It depends on heme b as a cofactor. The cofactor is FAD.

The catalysed reaction is 2 nitric oxide + NADPH + 2 O2 = 2 nitrate + NADP(+) + H(+). It carries out the reaction 2 nitric oxide + NADH + 2 O2 = 2 nitrate + NAD(+) + H(+). In terms of biological role, is involved in NO detoxification in an aerobic process, termed nitric oxide dioxygenase (NOD) reaction that utilizes O(2) and NAD(P)H to convert NO to nitrate, which protects the bacterium from various noxious nitrogen compounds. Therefore, plays a central role in the inducible response to nitrosative stress. The chain is Flavohemoprotein from Vibrio vulnificus (strain CMCP6).